The sequence spans 321 residues: Peptidase 1 (321 aa).

Positions 1–18 are cleaved as a signal peptide; the sequence is MKIILAIASLLVLSAVYA. The propeptide occupies 19–98; the sequence is RPASIKTFEE…LKTQFDLNAE (80 aa). Residue Asn-34 is glycosylated (N-linked (GlcNAc...) asparagine). A disulfide bridge connects residues Cys-130 and Cys-170. Residue Cys-133 is part of the active site. N-linked (GlcNAc...) asparagine glycosylation is present at Asn-151. Residues His-269 and Asn-289 contribute to the active site.

The protein belongs to the peptidase C1 family.

Its subcellular location is the secreted. The catalysed reaction is Broad endopeptidase specificity.. Probable thiol protease. This Euroglyphus maynei (Mayne's house dust mite) protein is Peptidase 1 (EURM1).